A 316-amino-acid polypeptide reads, in one-letter code: Probable 5-dehydro-4-deoxyglucarate dehydratase (316 aa).

This sequence belongs to the DapA family.

The enzyme catalyses 5-dehydro-4-deoxy-D-glucarate + H(+) = 2,5-dioxopentanoate + CO2 + H2O. The protein operates within carbohydrate acid metabolism; D-glucarate degradation; 2,5-dioxopentanoate from D-glucarate: step 2/2. The protein is Probable 5-dehydro-4-deoxyglucarate dehydratase of Corynebacterium glutamicum (strain R).